A 282-amino-acid chain; its full sequence is Bifunctional protein FolD (282 aa).

Residues 164–166 (GAS), isoleucine 189, and isoleucine 230 each bind NADP(+).

The protein belongs to the tetrahydrofolate dehydrogenase/cyclohydrolase family. As to quaternary structure, homodimer.

The enzyme catalyses (6R)-5,10-methylene-5,6,7,8-tetrahydrofolate + NADP(+) = (6R)-5,10-methenyltetrahydrofolate + NADPH. The catalysed reaction is (6R)-5,10-methenyltetrahydrofolate + H2O = (6R)-10-formyltetrahydrofolate + H(+). It functions in the pathway one-carbon metabolism; tetrahydrofolate interconversion. In terms of biological role, catalyzes the oxidation of 5,10-methylenetetrahydrofolate to 5,10-methenyltetrahydrofolate and then the hydrolysis of 5,10-methenyltetrahydrofolate to 10-formyltetrahydrofolate. The chain is Bifunctional protein FolD from Campylobacter jejuni subsp. jejuni serotype O:6 (strain 81116 / NCTC 11828).